Consider the following 334-residue polypeptide: tRNA U34 carboxymethyltransferase (334 aa).

Residues lysine 91, tryptophan 105, lysine 110, glycine 130, 152 to 154 (DPT), 181 to 182 (IE), methionine 196, tyrosine 200, and arginine 315 each bind carboxy-S-adenosyl-L-methionine.

It belongs to the class I-like SAM-binding methyltransferase superfamily. CmoB family. As to quaternary structure, homotetramer.

It carries out the reaction carboxy-S-adenosyl-L-methionine + 5-hydroxyuridine(34) in tRNA = 5-carboxymethoxyuridine(34) in tRNA + S-adenosyl-L-homocysteine + H(+). In terms of biological role, catalyzes carboxymethyl transfer from carboxy-S-adenosyl-L-methionine (Cx-SAM) to 5-hydroxyuridine (ho5U) to form 5-carboxymethoxyuridine (cmo5U) at position 34 in tRNAs. The chain is tRNA U34 carboxymethyltransferase from Klebsiella pneumoniae subsp. pneumoniae (strain ATCC 700721 / MGH 78578).